The sequence spans 391 residues: uncharacterized protein (391 aa).

Belongs to the mycobacterial PPE family.

This is an uncharacterized protein from Mycobacterium tuberculosis (strain CDC 1551 / Oshkosh).